The chain runs to 420 residues: Vasopressin V1a receptor (420 aa).

Residues 1–20 (MSFPRGSYDPAASNSSPWWP) are disordered. At 1–54 (MSFPRGSYDPAASNSSPWWPLSAEDANSSWEAAGHQKGSDPSGDVRNEELAKLE) the chain is on the extracellular side. An N-linked (GlcNAc...) asparagine glycan is attached at N27. Residues 55–75 (IAVLAVIFVVAVLGNSSVLLA) form a helical membrane-spanning segment. The Cytoplasmic portion of the chain corresponds to 76–92 (LHRTPRKTSRMHLFIRH). The chain crosses the membrane as a helical span at residues 93–113 (LSLADLAVAFFQVLPQLCWDI). The Extracellular segment spans residues 114–125 (TYRFRGPDWLCR). The cysteines at positions 124 and 205 are disulfide-linked. The chain crosses the membrane as a helical span at residues 126–146 (VVKHLQVFAMFASAYMLVVMT). Topologically, residues 147–168 (ADRYIAVCHPLKTLQQPTRRSR) are cytoplasmic. The chain crosses the membrane as a helical span at residues 169–189 (LMIAASWVLSFLLSTPQYFIF). Residues 190-225 (SMIEIEVNNGTKTQDCWATFIQPWGTRAYVTWMTSG) are Extracellular-facing. An N-linked (GlcNAc...) asparagine glycan is attached at N198. Residues 226 to 246 (VFVVPVVILGTCYGFICYHIW) traverse the membrane as a helical segment. The Cytoplasmic segment spans residues 247–294 (RNVRGKTASRQSKGSGEDVAPFHKGLLVTPCVSSVKTISRAKIRTVKM). Residues 295-315 (TFVIVTAYILCWAPFFIVQMW) traverse the membrane as a helical segment. Residues 316-331 (SVWDDNFIWTDSENPS) lie on the Extracellular side of the membrane. A helical membrane pass occupies residues 332–352 (ITITALLASLNSCCNPWIYMF). At 353–420 (FSGHLLQDCV…RSIRFIPVST (68 aa)) the chain is on the cytoplasmic side. S-palmitoyl cysteine attachment occurs at residues C367 and C368. The tract at residues 379-411 (DSDNMSRRHTSYSNNRSPTNSTGTWKDSPKSSR) is disordered. Residues 389–403 (SYSNNRSPTNSTGTW) show a composition bias toward polar residues. The residue at position 406 (S406) is a Phosphoserine.

The protein belongs to the G-protein coupled receptor 1 family. Vasopressin/oxytocin receptor subfamily.

It is found in the cell membrane. Functionally, receptor for arginine vasopressin. The activity of this receptor is mediated by G proteins which activate a phosphatidyl-inositol-calcium second messenger system. Involved in social memory formation. The sequence is that of Vasopressin V1a receptor (Avpr1a) from Microtus ochrogaster (Prairie vole).